A 380-amino-acid polypeptide reads, in one-letter code: Mitogen-activated protein kinase 3 (380 aa).

A2 bears the N-acetylalanine mark. The Protein kinase domain occupies 43–331 (YTQLQYIGEG…VEEALAHPYL (289 aa)). ATP-binding positions include 49–57 (IGEGAYGMV) and K72. The active-site Proton acceptor is the D167. T199 is subject to Phosphothreonine. T203 bears the Phosphothreonine; by MAP2K1 and MAP2K2 mark. The TXY signature appears at 203–205 (TEY). Y205 is subject to Phosphotyrosine; by MAP2K1 and MAP2K2. T208 carries the post-translational modification Phosphothreonine; by autocatalysis.

This sequence belongs to the protein kinase superfamily. CMGC Ser/Thr protein kinase family. MAP kinase subfamily. In terms of assembly, binds both upstream activators and downstream substrates in multimolecular complexes. Found in a complex with at least BRAF, HRAS, MAP2K1/MEK1, MAPK3 and RGS14. Interacts with ADAM15, ARRB2, CANX, DAPK1 (via death domain), HSF4, IER3, MAP2K1/MEK1, MORG1, NISCH, PEA15, SGK1 and MKNK2. MKNK2 isoform 1 binding prevents from dephosphorylation and inactivation. Interacts with TPR. Interacts with HSF1 (via D domain and preferentially with hyperphosphorylated form); this interaction occurs upon heat shock. Interacts with CDKN2AIP. Interacts with CAVIN4. Interacts with GIT1; this interaction is necessary for MAPK3 localization to focal adhesions. Interacts with ZNF263. Interacts with EBF4. Mg(2+) is required as a cofactor. Post-translationally, phosphorylated upon FLT3 and KIT signaling. Ligand-activated ALK induces tyrosine phosphorylation. Dephosphorylated by PTPRJ at Tyr-205. Dually phosphorylated on Thr-203 and Tyr-205, which activates the enzyme. In terms of processing, ubiquitinated by TRIM15 via 'Lys-63'-linked ubiquitination; leading to activation. Deubiquitinated by CYLD. In terms of tissue distribution, highest levels within the nervous system, expressed in different tissues, mostly in intestine, placenta and lung.

Its subcellular location is the cytoplasm. It is found in the nucleus. The protein localises to the membrane. It localises to the caveola. The protein resides in the cell junction. Its subcellular location is the focal adhesion. It carries out the reaction L-seryl-[protein] + ATP = O-phospho-L-seryl-[protein] + ADP + H(+). The enzyme catalyses L-threonyl-[protein] + ATP = O-phospho-L-threonyl-[protein] + ADP + H(+). With respect to regulation, phosphorylated by MAP2K1/MEK1 and MAP2K2/MEK2 on Thr-203 and Tyr-205 in response to external stimuli like insulin or NGF. Both phosphorylations are required for activity. This phosphorylation causes dramatic conformational changes, which enable full activation and interaction of MAPK1/ERK2 with its substrates. Dephosphorylated and inactivated by DUSP3, DUSP6 and DUSP9. Serine/threonine kinase which acts as an essential component of the MAP kinase signal transduction pathway. MAPK1/ERK2 and MAPK3/ERK1 are the 2 MAPKs which play an important role in the MAPK/ERK cascade. They participate also in a signaling cascade initiated by activated KIT and KITLG/SCF. Depending on the cellular context, the MAPK/ERK cascade mediates diverse biological functions such as cell growth, adhesion, survival and differentiation through the regulation of transcription, translation, cytoskeletal rearrangements. The MAPK/ERK cascade also plays a role in initiation and regulation of meiosis, mitosis, and postmitotic functions in differentiated cells by phosphorylating a number of transcription factors. About 160 substrates have already been discovered for ERKs. Many of these substrates are localized in the nucleus, and seem to participate in the regulation of transcription upon stimulation. However, other substrates are found in the cytosol as well as in other cellular organelles, and those are responsible for processes such as translation, mitosis and apoptosis. Moreover, the MAPK/ERK cascade is also involved in the regulation of the endosomal dynamics, including lysosome processing and endosome cycling through the perinuclear recycling compartment (PNRC); as well as in the fragmentation of the Golgi apparatus during mitosis. The substrates include transcription factors (such as ATF2, BCL6, ELK1, ERF, FOS, HSF4 or SPZ1), cytoskeletal elements (such as CANX, CTTN, GJA1, MAP2, MAPT, PXN, SORBS3 or STMN1), regulators of apoptosis (such as BAD, BTG2, CASP9, DAPK1, IER3, MCL1 or PPARG), regulators of translation (such as EIF4EBP1) and a variety of other signaling-related molecules (like ARHGEF2, DEPTOR, FRS2 or GRB10). Protein kinases (such as RAF1, RPS6KA1/RSK1, RPS6KA3/RSK2, RPS6KA2/RSK3, RPS6KA6/RSK4, SYK, MKNK1/MNK1, MKNK2/MNK2, RPS6KA5/MSK1, RPS6KA4/MSK2, MAPKAPK3 or MAPKAPK5) and phosphatases (such as DUSP1, DUSP4, DUSP6 or DUSP16) are other substrates which enable the propagation the MAPK/ERK signal to additional cytosolic and nuclear targets, thereby extending the specificity of the cascade. The sequence is that of Mitogen-activated protein kinase 3 (Mapk3) from Rattus norvegicus (Rat).